Consider the following 163-residue polypeptide: MYTSKQPFHKSKQTFHKSKQTFRKSKQTFRKFKQPFRKPKQPFRRRPRIGPGDRIDYRNMSLINRFISEQGKILSRRINRLTLKQQRLITLAIKQARILSFLPFRNYENEKQFQAQSISIITGPRPRKNRHIPPLTQKFNSNRNLRNSNQTLRNNNRNLSSDC.

Disordered regions lie at residues 1–54 and 121–163; these read MYTS…PGDR and ITGP…SSDC. Residues 7–48 are compositionally biased toward basic residues; sequence PFHKSKQTFHKSKQTFRKSKQTFRKFKQPFRKPKQPFRRRPR. The segment covering 140 to 163 has biased composition (low complexity); sequence NSNRNLRNSNQTLRNNNRNLSSDC.

Belongs to the bacterial ribosomal protein bS18 family. As to quaternary structure, part of the 30S ribosomal subunit.

The protein resides in the plastid. It is found in the chloroplast. The chain is Small ribosomal subunit protein bS18c from Oryza nivara (Indian wild rice).